The primary structure comprises 425 residues: Pleckstrin homology domain-containing family A member 2 (425 aa).

A PH 1 domain is found at 7-113 (QNRICGFLDI…WVEALNQASK (107 aa)). Lys141 participates in a covalent cross-link: Glycyl lysine isopeptide (Lys-Gly) (interchain with G-Cter in SUMO2). Ser184 carries the phosphoserine modification. Residues 198–298 (PLIKSGYCVK…WIKEIGAAVQ (101 aa)) enclose the PH 2 domain. A phosphoserine mark is found at Ser314 and Ser349. Residues 374 to 410 (AEDSLFTPRLGESSTSAVLPSSRIRHRSEPQHPKEKP) are disordered. A compositionally biased stretch (basic and acidic residues) spans 400-410 (RSEPQHPKEKP).

As to quaternary structure, binds MPDZ and PTPN13.

It localises to the cytoplasm. It is found in the cell membrane. The protein localises to the nucleus. In terms of biological role, binds specifically to phosphatidylinositol 3,4-diphosphate (PtdIns3,4P2), but not to other phosphoinositides. May recruit other proteins to the plasma membrane. The chain is Pleckstrin homology domain-containing family A member 2 (PLEKHA2) from Bos taurus (Bovine).